A 781-amino-acid polypeptide reads, in one-letter code: Mitochondrial inner membrane m-AAA protease component paraplegin (781 aa).

A mitochondrion-targeting transit peptide spans 1 to 43; that stretch reads MAAALLLLRALRQSPEPGPWRLWAQLSGRSPGLFSGAGGRRPY. A propeptide spans 44–105 (removed in mature form); that stretch reads VVRGTPIGLA…GSTLYFNTSG (62 aa). The disordered stretch occupies residues 105 to 134; the sequence is GLKQKNKDDDKPKGKAPEDDEEERRRKERE. Over 106–144 the chain is Mitochondrial matrix; sequence LKQKNKDDDKPKGKAPEDDEEERRRKEREDQMYRERLRT. The segment covering 109–134 has biased composition (basic and acidic residues); it reads KNKDDDKPKGKAPEDDEEERRRKERE. Residues 145 to 165 form a helical membrane-spanning segment; that stretch reads LFIIAIVMSLLNSLSTSGGSI. Topologically, residues 166–248 are mitochondrial intermembrane; it reads SWADFVNEML…DRIPVSYKRT (83 aa). The helical transmembrane segment at 249-269 threads the bilayer; that stretch reads GFFGNALYALGMTAVGLAILW. Residues 270–781 lie on the Mitochondrial matrix side of the membrane; it reads YVFRLAGMTG…ASGEEEAPAP (512 aa). Residues alanine 312, glycine 352, cysteine 353, glycine 354, lysine 355, threonine 356, and leucine 357 each contribute to the ATP site. Tyrosine 505 carries the post-translational modification 3'-nitrotyrosine. Zn(2+) is bound at residue histidine 574. Residue glutamate 575 is part of the active site. Zn(2+)-binding residues include histidine 578 and aspartate 650. The interaction with PPIF stretch occupies residues 701–781; the sequence is HEARLLVARA…ASGEEEAPAP (81 aa).

It in the N-terminal section; belongs to the AAA ATPase family. In the C-terminal section; belongs to the peptidase M41 family. Forms heterooligomers with AFG3L2; the m-AAA protease is composed of heterohexamers of AFG3L2 and SPG7. Component of the mitochondrial permeability transition pore complex (mPTPC), at least composed of SPG7, VDAC1 and PPIF. Interacts with MAIP1. Requires Zn(2+) as cofactor. Upon import into the mitochondrion, the N-terminal transit peptide is cleaved by the mitochondrial-processing peptidase (MPP) to generate an intermediate form which undergoes a second proteolytic cleavage mediated by proteases AFG3L2 removing an additional N-terminal fragment to generate the proteolytically active mature form.

Its subcellular location is the mitochondrion inner membrane. It carries out the reaction ATP + H2O = ADP + phosphate + H(+). Catalytic component of the m-AAA protease, a protease that plays a key role in proteostasis of inner mitochondrial membrane proteins, and which is essential for axonal and neuron development. SPG7 possesses both ATPase and protease activities: the ATPase activity is required to unfold substrates, threading them into the internal proteolytic cavity for hydrolysis into small peptide fragments. The m-AAA protease exerts a dual role in the mitochondrial inner membrane: it mediates the processing of specific regulatory proteins and ensures protein quality control by degrading misfolded polypeptides. Mediates protein maturation of the mitochondrial ribosomal subunit MRPL32/bL32m by catalyzing the cleavage of the presequence of MRPL32/bL32m prior to assembly into the mitochondrial ribosome. Acts as a regulator of calcium in neurons by mediating degradation of SMDT1/EMRE before its assembly with the uniporter complex, limiting the availability of SMDT1/EMRE for MCU assembly and promoting efficient assembly of gatekeeper subunits with MCU. Also regulates mitochondrial calcium by catalyzing degradation of MCU. Plays a role in the formation and regulation of the mitochondrial permeability transition pore (mPTP) and its proteolytic activity is dispensable for this function. The chain is Mitochondrial inner membrane m-AAA protease component paraplegin (Spg7) from Rattus norvegicus (Rat).